Here is a 132-residue protein sequence, read N- to C-terminus: MSCGMSQLERSIDTIINVFHQYSVRVGPRDSLSQKEFKQLVQKELHNFLKKEARDEKAINDIMEDLDTNQDKQLSFEEFVILMARLVHASHEEMHKNAPHDHEGHSHGPGLGGGGPGHGHGHSHGHGHGHSH.

Cysteine 3 is subject to S-nitrosocysteine. Zn(2+) is bound at residue histidine 20. Serine 23 provides a ligand contact to Ca(2+). 2 EF-hand domains span residues 26 to 61 (VGPRDSLSQKEFKQLVQKELHNFLKKEARDEKAIND) and 54 to 89 (RDEKAINDIMEDLDTNQDKQLSFEEFVILMARLVHA). Aspartate 30 is a Zn(2+) binding site. 6 residues coordinate Ca(2+): glutamate 36, aspartate 67, asparagine 69, aspartate 71, glutamine 73, and glutamate 78. Positions 91 and 95 each coordinate Zn(2+). The span at 92 to 106 (EEMHKNAPHDHEGHS) shows a compositional bias: basic and acidic residues. The interval 92 to 132 (EEMHKNAPHDHEGHSHGPGLGGGGPGHGHGHSHGHGHGHSH) is disordered. Histidine 107 carries the pros-methylhistidine modification. Over residues 107–118 (HGPGLGGGGPGH) the composition is skewed to gly residues. 2 consecutive repeat copies span residues 117 to 124 (GHGHGHSH) and 125 to 132 (GHGHGHSH). The 2 X 8 AA tandem repeats of G-H-G-H-G-H-S-H stretch occupies residues 117–132 (GHGHGHSHGHGHGHSH). The segment covering 119 to 132 (GHGHSHGHGHGHSH) has biased composition (basic residues).

This sequence belongs to the S-100 family. As to quaternary structure, homodimer. Preferentially exists as a heterodimer or heterotetramer with S100A8 known as calprotectin (S100A8/A9). S100A9 interacts with ATP2A2. S100A9 interacts with AGER, and with the heterodimeric complex formed by TLR4 and LY96 in the presence of calcium and/or zinc ions. S100A9 binds quinoline-3-carboxamides in the presence of calcium and/or zinc ions. S100A9 interacts with amyloid-beta protein 40. Calprotectin (S100A8/9) interacts with CEACAM3 and tubulin filaments in a calcium-dependent manner. Heterotetrameric calprotectin (S100A8/A9) interacts with ANXA6 and associates with tubulin filaments in activated monocytes. Calprotectin (S100A8/9) interacts with NCF2/P67PHOX, RAC1, RAC2, CYBA and CYBB. Calprotectin (S100A8/9) interacts with NOS2 to form the iNOS-S100A8/A9 transnitrosylase complex; induced by LDL(ox). Calprotectin (S100A8/9) interacts with CD69. In terms of processing, phosphorylated. Phosphorylation inhibits activation of tubulin polymerization. Post-translationally, methylation at His-107 by METTL9 reduces zinc-binding without affecting heterodimerization with S100A8.

The protein localises to the secreted. Its subcellular location is the cytoplasm. It localises to the cytoskeleton. The protein resides in the cell membrane. In terms of biological role, S100A9 is a calcium- and zinc-binding protein which plays a prominent role in the regulation of inflammatory processes and immune response. It can induce neutrophil chemotaxis, adhesion, can increase the bactericidal activity of neutrophils by promoting phagocytosis via activation of SYK, PI3K/AKT, and ERK1/2 and can induce degranulation of neutrophils by a MAPK-dependent mechanism. Predominantly found as calprotectin (S100A8/A9) which has a wide plethora of intra- and extracellular functions. The intracellular functions include: facilitating leukocyte arachidonic acid trafficking and metabolism, modulation of the tubulin-dependent cytoskeleton during migration of phagocytes and activation of the neutrophilic NADPH-oxidase. Also participates in regulatory T-cell differentiation together with CD69. Activates NADPH-oxidase by facilitating the enzyme complex assembly at the cell membrane, transferring arachidonic acid, an essential cofactor, to the enzyme complex and S100A8 contributes to the enzyme assembly by directly binding to NCF2/P67PHOX. The extracellular functions involve pro-inflammatory, antimicrobial, oxidant-scavenging and apoptosis-inducing activities. Its pro-inflammatory activity includes recruitment of leukocytes, promotion of cytokine and chemokine production, and regulation of leukocyte adhesion and migration. Acts as an alarmin or a danger associated molecular pattern (DAMP) molecule and stimulates innate immune cells via binding to pattern recognition receptors such as Toll-like receptor 4 (TLR4) and receptor for advanced glycation endproducts (AGER). Binding to TLR4 and AGER activates the MAP-kinase and NF-kappa-B signaling pathways resulting in the amplification of the pro-inflammatory cascade. Has antimicrobial activity towards bacteria and fungi and exerts its antimicrobial activity probably via chelation of Zn(2+) which is essential for microbial growth. Can induce cell death via autophagy and apoptosis and this occurs through the cross-talk of mitochondria and lysosomes via reactive oxygen species (ROS) and the process involves BNIP3. Can regulate neutrophil number and apoptosis by an anti-apoptotic effect; regulates cell survival via ITGAM/ITGB and TLR4 and a signaling mechanism involving MEK-ERK. Its role as an oxidant scavenger has a protective role in preventing exaggerated tissue damage by scavenging oxidants. The iNOS-S100A8/A9 transnitrosylase complex is proposed to direct selective inflammatory stimulus-dependent S-nitrosylation of multiple targets such as GAPDH, NXA5, EZR, MSN and VIM by recognizing a [IL]-x-C-x-x-[DE] motif. This chain is Protein S100-A9 (S100A9), found in Oryctolagus cuniculus (Rabbit).